The primary structure comprises 110 residues: UPF0060 membrane protein Pmen_1247 (110 aa).

The next 4 helical transmembrane spans lie at 5-25 (LWFL…WMWL), 31-51 (AWWI…LTRV), 59-79 (AYAA…ALIE), and 84-104 (MLSD…ILFA).

It belongs to the UPF0060 family.

It localises to the cell inner membrane. This is UPF0060 membrane protein Pmen_1247 from Ectopseudomonas mendocina (strain ymp) (Pseudomonas mendocina).